Consider the following 348-residue polypeptide: RNA 3'-terminal phosphate cyclase (348 aa).

ATP-binding positions include Q107 and 290 to 294; that span reads HLADQ. Residue H316 is the Tele-AMP-histidine intermediate of the active site.

The protein belongs to the RNA 3'-terminal cyclase family. Type 1 subfamily.

Its subcellular location is the cytoplasm. It catalyses the reaction a 3'-end 3'-phospho-ribonucleotide-RNA + ATP = a 3'-end 2',3'-cyclophospho-ribonucleotide-RNA + AMP + diphosphate. Functionally, catalyzes the conversion of 3'-phosphate to a 2',3'-cyclic phosphodiester at the end of RNA. The mechanism of action of the enzyme occurs in 3 steps: (A) adenylation of the enzyme by ATP; (B) transfer of adenylate to an RNA-N3'P to produce RNA-N3'PP5'A; (C) and attack of the adjacent 2'-hydroxyl on the 3'-phosphorus in the diester linkage to produce the cyclic end product. The biological role of this enzyme is unknown but it is likely to function in some aspects of cellular RNA processing. This is RNA 3'-terminal phosphate cyclase from Trichormus variabilis (strain ATCC 29413 / PCC 7937) (Anabaena variabilis).